We begin with the raw amino-acid sequence, 131 residues long: uncharacterized protein (131 aa).

The stretch at Gln4 to Asn44 forms a coiled coil.

This is an uncharacterized protein from Sulfolobus islandicus filamentous virus (isolate Iceland/Hveragerdi) (SIFV).